Here is a 60-residue protein sequence, read N- to C-terminus: MAKLQITLTRSVIGRPETQRKTVEALGLKKTNSSVVVEDNPAIRGQINKVKHLLTIEEEK.

It belongs to the universal ribosomal protein uL30 family. As to quaternary structure, part of the 50S ribosomal subunit.

The chain is Large ribosomal subunit protein uL30 from Staphylococcus epidermidis (strain ATCC 35984 / DSM 28319 / BCRC 17069 / CCUG 31568 / BM 3577 / RP62A).